The primary structure comprises 122 residues: Large ribosomal subunit protein bL12 (122 aa).

The protein belongs to the bacterial ribosomal protein bL12 family. As to quaternary structure, homodimer. Part of the ribosomal stalk of the 50S ribosomal subunit. Forms a multimeric L10(L12)X complex, where L10 forms an elongated spine to which 2 to 4 L12 dimers bind in a sequential fashion. Binds GTP-bound translation factors.

Functionally, forms part of the ribosomal stalk which helps the ribosome interact with GTP-bound translation factors. Is thus essential for accurate translation. This is Large ribosomal subunit protein bL12 from Pseudomonas entomophila (strain L48).